Consider the following 159-residue polypeptide: Na(+)/H(+) antiporter subunit E1 (159 aa).

4 consecutive transmembrane segments (helical) span residues 1–21, 27–47, 60–80, and 101–121; these read MAIQ…VTNS, FVLG…VLPG, LIIT…KIIL, and WQLV…VLGI.

The protein belongs to the CPA3 antiporters (TC 2.A.63) subunit E family. As to quaternary structure, may form a heterooligomeric complex that consists of seven subunits: mnhA1, mnhB1, mnhC1, mnhD1, mnhE1, mnhF1 and mnhG1.

It localises to the cell membrane. Mnh complex is a Na(+)/H(+) antiporter involved in Na(+) excretion. This chain is Na(+)/H(+) antiporter subunit E1 (mnhE1), found in Staphylococcus epidermidis (strain ATCC 35984 / DSM 28319 / BCRC 17069 / CCUG 31568 / BM 3577 / RP62A).